Here is a 293-residue protein sequence, read N- to C-terminus: MKCPYCKTDNAITYDVEKGMYVCTNCASVIEDSAVDPGPDWRAYNAKDRNEKERVGSPSTPKVHDWGFHTIIGYGRAKDRLKTLKMQRMQNKIRVSPKDKKLVTLLSILNDESSKLELPEHVKETASLIIRKMVETGLTKRIDQYTLIVAALYYSCQVNNIPRHLQEFKVRYSISSSEFWSALKRVQYVANSIPGFRPKIKPAEYIPKILYKLNLPPIIGTKASELVDLMHKQGLTSGKGYLSLSAASVYLISALMDIKKTQKEVADSLDITEVTIRNRYKDIVDNFDIVVTL.

The TFIIB-type zinc-finger motif lies at 1–31 (MKCPYCKTDNAITYDVEKGMYVCTNCASVIE). The Zn(2+) site is built by C3, C6, C23, and C26. 2 tandem repeats follow at residues 107–193 (SILN…ANSI) and 204–285 (EYIP…DIVD).

The protein belongs to the TFIIB family.

Functionally, stabilizes TBP binding to an archaeal box-A promoter. Also responsible for recruiting RNA polymerase II to the pre-initiation complex (DNA-TBP-TFIIB). The chain is Transcription initiation factor IIB 2 from Saccharolobus solfataricus (strain ATCC 35092 / DSM 1617 / JCM 11322 / P2) (Sulfolobus solfataricus).